We begin with the raw amino-acid sequence, 548 residues long: Membrane protein insertase YidC (548 aa).

Residues 6–26 (NLLVIALLFVSFMIWQAWEQD) traverse the membrane as a helical segment. Residues 28–55 (NPQPQAQQTTQTTTTAAGSAADQGVPAS) are disordered. Positions 30 to 50 (QPQAQQTTQTTTTAAGSAADQ) are enriched in low complexity. 4 helical membrane-spanning segments follow: residues 350-370 (FVGNWGFSIIIITFIVRGIMY), 420-440 (LGGCFPLLIQMPIFLALYYML), 458-478 (LSAQDPYYILPILMGVTMFFI), and 499-519 (PVIFTVFFLWFPSGLVLYYIV).

The protein belongs to the OXA1/ALB3/YidC family. Type 1 subfamily. In terms of assembly, interacts with the Sec translocase complex via SecD. Specifically interacts with transmembrane segments of nascent integral membrane proteins during membrane integration.

It localises to the cell inner membrane. Required for the insertion and/or proper folding and/or complex formation of integral membrane proteins into the membrane. Involved in integration of membrane proteins that insert both dependently and independently of the Sec translocase complex, as well as at least some lipoproteins. Aids folding of multispanning membrane proteins. The chain is Membrane protein insertase YidC from Shigella flexneri.